The primary structure comprises 376 residues: Thymidine kinase (376 aa).

Positions 1 to 39 are disordered; the sequence is MASYPCHQHASAFDQAARSRGHSNRRTALRPRRQQEATE. Over residues 19–32 the composition is skewed to basic residues; sequence SRGHSNRRTALRPR. Residue 56-63 participates in ATP binding; the sequence is GPHGMGKT. Glu-83 functions as the Proton acceptor in the catalytic mechanism. Substrate is bound by residues Tyr-101 and Gln-125. Position 216 (Arg-216) interacts with ATP. Arg-222 contributes to the substrate binding site. The segment at 260–280 is disordered; sequence GQLSGTAVPPQGAEPQSNAGP.

It belongs to the herpesviridae thymidine kinase family. Homodimer.

The catalysed reaction is thymidine + ATP = dTMP + ADP + H(+). Its function is as follows. Catalyzes the transfer of the gamma-phospho group of ATP to thymidine to generate dTMP in the salvage pathway of pyrimidine synthesis. The dTMP serves as a substrate for DNA polymerase during viral DNA replication. Allows the virus to be reactivated and to grow in non-proliferative cells lacking a high concentration of phosphorylated nucleic acid precursors. This Homo sapiens (Human) protein is Thymidine kinase.